Consider the following 705-residue polypeptide: uncharacterized protein (705 aa).

Positions 24–52 form a DNA-binding region, zn(2)-C6 fungal-type; sequence CHFCRVRKLKCDRVRPFCGSCSSRNRKQC.

The protein resides in the nucleus. This is an uncharacterized protein from Saccharomyces cerevisiae (strain ATCC 204508 / S288c) (Baker's yeast).